We begin with the raw amino-acid sequence, 283 residues long: Lipoyl synthase (283 aa).

[4Fe-4S] cluster is bound by residues Cys35, Cys40, Cys46, Cys61, Cys65, Cys68, and Ser273. Residues 47 to 262 (FRSRQATFLI…RERALAMGFK (216 aa)) enclose the Radical SAM core domain.

Belongs to the radical SAM superfamily. Lipoyl synthase family. [4Fe-4S] cluster is required as a cofactor.

It localises to the cytoplasm. It catalyses the reaction [[Fe-S] cluster scaffold protein carrying a second [4Fe-4S](2+) cluster] + N(6)-octanoyl-L-lysyl-[protein] + 2 oxidized [2Fe-2S]-[ferredoxin] + 2 S-adenosyl-L-methionine + 4 H(+) = [[Fe-S] cluster scaffold protein] + N(6)-[(R)-dihydrolipoyl]-L-lysyl-[protein] + 4 Fe(3+) + 2 hydrogen sulfide + 2 5'-deoxyadenosine + 2 L-methionine + 2 reduced [2Fe-2S]-[ferredoxin]. Its pathway is protein modification; protein lipoylation via endogenous pathway; protein N(6)-(lipoyl)lysine from octanoyl-[acyl-carrier-protein]: step 2/2. Functionally, catalyzes the radical-mediated insertion of two sulfur atoms into the C-6 and C-8 positions of the octanoyl moiety bound to the lipoyl domains of lipoate-dependent enzymes, thereby converting the octanoylated domains into lipoylated derivatives. This is Lipoyl synthase from Geotalea uraniireducens (strain Rf4) (Geobacter uraniireducens).